The following is an 87-amino-acid chain: Small ribosomal subunit protein uS17 (87 aa).

This sequence belongs to the universal ribosomal protein uS17 family. In terms of assembly, part of the 30S ribosomal subunit.

Its function is as follows. One of the primary rRNA binding proteins, it binds specifically to the 5'-end of 16S ribosomal RNA. In Bacillus cereus (strain ATCC 14579 / DSM 31 / CCUG 7414 / JCM 2152 / NBRC 15305 / NCIMB 9373 / NCTC 2599 / NRRL B-3711), this protein is Small ribosomal subunit protein uS17.